A 161-amino-acid polypeptide reads, in one-letter code: Large ribosomal subunit protein uL15 (161 aa).

A disordered region spans residues methionine 1 to valine 44. The span at arginine 21 to glycine 37 shows a compositional bias: gly residues.

This sequence belongs to the universal ribosomal protein uL15 family. In terms of assembly, part of the 50S ribosomal subunit.

Functionally, binds to the 23S rRNA. The protein is Large ribosomal subunit protein uL15 of Rhodopseudomonas palustris (strain BisA53).